The chain runs to 411 residues: UPF0761 membrane protein PSPA7_4558 (411 aa).

6 helical membrane passes run 36 to 56, 92 to 112, 132 to 152, 174 to 194, 207 to 229, and 244 to 264; these read LFAV…IPAF, HLTW…LVTI, FLLY…GFAV, LLGL…YSAV, GGMF…VSLF, and IFLL…VLVC.

Belongs to the UPF0761 family.

The protein resides in the cell inner membrane. This is UPF0761 membrane protein PSPA7_4558 from Pseudomonas paraeruginosa (strain DSM 24068 / PA7) (Pseudomonas aeruginosa (strain PA7)).